A 525-amino-acid polypeptide reads, in one-letter code: ADP-ribosylation factor GTPase-activating protein 3 (525 aa).

One can recognise an Arf-GAP domain in the interval leucine 10–arginine 126. The C4-type zinc finger occupies cysteine 25–cysteine 48. The tract at residues valine 160–leucine 233 is disordered. The span at glycine 162–proline 177 shows a compositional bias: polar residues. Positions alanine 222 to leucine 233 are enriched in low complexity. Residues serine 232, serine 242, serine 271, and serine 275 each carry the phosphoserine modification. The disordered stretch occupies residues glutamine 249–serine 271. Residues leucine 293–arginine 305 show a composition bias toward basic and acidic residues. 2 disordered regions span residues leucine 293–arginine 364 and phenylalanine 377–lysine 428. A compositionally biased stretch (polar residues) spans histidine 319 to proline 333. Serine 332 carries the post-translational modification Phosphoserine. A compositionally biased stretch (low complexity) spans serine 349 to serine 363. Residue serine 379 is modified to Phosphoserine. Residues tyrosine 387 to proline 398 are compositionally biased toward basic and acidic residues. A phosphoserine mark is found at serine 437, serine 460, serine 462, serine 464, serine 466, and serine 467.

It is found in the cytoplasm. The protein resides in the golgi apparatus membrane. With respect to regulation, GAP activity stimulated by phosphatidylinositol 4,5-bisphosphate (PIP2). Functionally, GTPase-activating protein (GAP) for ADP ribosylation factor 1 (ARF1). Hydrolysis of ARF1-bound GTP may lead to dissociation of coatomer from Golgi-derived membranes to allow fusion with target membranes. The polypeptide is ADP-ribosylation factor GTPase-activating protein 3 (Rattus norvegicus (Rat)).